Consider the following 183-residue polypeptide: ATP-dependent protease subunit HslV (183 aa).

The active site involves Thr-7. Na(+)-binding residues include Gly-162, Cys-165, and Thr-168.

This sequence belongs to the peptidase T1B family. HslV subfamily. As to quaternary structure, a double ring-shaped homohexamer of HslV is capped on each side by a ring-shaped HslU homohexamer. The assembly of the HslU/HslV complex is dependent on binding of ATP.

It is found in the cytoplasm. It carries out the reaction ATP-dependent cleavage of peptide bonds with broad specificity.. Its activity is regulated as follows. Allosterically activated by HslU binding. In terms of biological role, protease subunit of a proteasome-like degradation complex believed to be a general protein degrading machinery. The chain is ATP-dependent protease subunit HslV from Alkalilimnicola ehrlichii (strain ATCC BAA-1101 / DSM 17681 / MLHE-1).